The primary structure comprises 2376 residues: Serine/threonine-protein kinase WNK1 (2376 aa).

Disordered regions lie at residues Met-1–Phe-78 and Glu-93–Asp-201. 2 stretches are compositionally biased toward low complexity: residues Ser-10–Ser-19 and Gly-40–Gly-49. Phosphoserine occurs at positions 15 and 19. A compositionally biased stretch (basic and acidic residues) spans Arg-50–Arg-66. Thr-60 carries the post-translational modification Phosphothreonine. The span at Thr-125 to Ala-158 shows a compositional bias: low complexity. The residue at position 172 (Ser-172) is a Phosphoserine. The Protein kinase domain occupies Leu-219–Phe-477. Ser-229 provides a ligand contact to ATP. Residues Phe-281 and Leu-297 each coordinate chloride. ATP-binding positions include Thr-299–Met-302 and Lys-349. Asp-366 acts as the Proton acceptor in catalysis. Chloride contacts are provided by Leu-367 and Leu-369. Residues Ser-376 and Ser-380 each carry the phosphoserine; by autocatalysis modification. Positions Glu-486–Ala-553 are autoinhibitory domain. Positions Gln-571 to Ser-586 are enriched in basic and acidic residues. Disordered regions lie at residues Gln-571–Tyr-641, Ala-701–Thr-799, and Thr-1026–Lys-1118. Composition is skewed to low complexity over residues Leu-587–Gly-601 and Ala-614–Thr-624. The tract at residues Glu-627–Gln-637 is interaction with KLHL3. Residues Pro-708–Gln-752 show a composition bias toward low complexity. A compositionally biased stretch (polar residues) spans Thr-753–Glu-766. Residues Pro-1045–Thr-1057 are compositionally biased toward pro residues. Residues Ser-1079–Ser-1089 show a composition bias toward polar residues. Residues Ile-1097–Lys-1118 are compositionally biased toward basic residues. The RFXV motif 1 signature appears at Arg-1257–Val-1260. Ser-1261 carries the post-translational modification Phosphoserine. Disordered stretches follow at residues Ser-1459–Ser-1478 and Ser-1734–Glu-1770. The segment covering Ser-1746–Leu-1756 has biased composition (pro residues). The RFXV motif 2 motif lies at Arg-1853–Val-1856. Residues Asp-1862–His-1878 show a composition bias toward basic and acidic residues. Residues Asp-1862–Val-1942 form a disordered region. The span at Ser-1881–Val-1899 shows a compositional bias: low complexity. 2 consecutive short sequence motifs (RFXV motif) follow at residues Arg-1939–Val-1942 and Arg-1951–Val-1954. Phosphoserine occurs at positions 1972, 1996, 2005, 2006, 2021, 2023, and 2026. Disordered regions lie at residues Glu-1991–Lys-2033 and Ala-2110–Thr-2239. The span at Gly-2116 to Lys-2128 shows a compositional bias: basic residues. A compositionally biased stretch (low complexity) spans Ser-2129–Gly-2141. Composition is skewed to polar residues over residues Leu-2146 to Leu-2161 and Glu-2169 to Thr-2193. Residues Gly-2207–Gln-2223 show a composition bias toward low complexity. Residues Ala-2224–Gly-2238 show a composition bias toward polar residues. An amphipathic alpha-helix region spans residues Ser-2235 to Ala-2255. Phosphoserine is present on residues Ser-2264, Ser-2280, Ser-2364, and Ser-2366.

This sequence belongs to the protein kinase superfamily. Ser/Thr protein kinase family. WNK subfamily. In terms of assembly, interacts with WNK3. Interacts with WNK4; inhibiting the activity of WNK4. Interacts with SGK1; promoting its activation. Associates with the mTORC2 complex. Interacts with UVRAG. Interacts (via amphipathic alpha-helix region) with EMC2; promoting the ER membrane protein complex assembly. Requires Mg(2+) as cofactor. In terms of processing, autophosphorylated at Ser-376 and Ser-380, promoting its activity. Autophosphorylation at Ser-380 is inhibited by intracellular calcium. Phosphorylation at Thr-60 increases ability to activate SGK1. Ubiquitinated by the BCR(KLHL3) complex, leading to its degradation. Also ubiquitinated by the BCR(KLHL2) complex.

The protein localises to the cytoplasm. Its subcellular location is the nucleus. It localises to the cytoskeleton. The protein resides in the spindle. The catalysed reaction is L-seryl-[protein] + ATP = O-phospho-L-seryl-[protein] + ADP + H(+). The enzyme catalyses L-threonyl-[protein] + ATP = O-phospho-L-threonyl-[protein] + ADP + H(+). Its activity is regulated as follows. Activated in response to hyperosmotic stress: cell shrinkage promotes formation of a membraneless compartment that concentrates WNK1 with its substrates, OXSR1/OSR1 and STK39/SPAK. Activation requires autophosphorylation of Ser-380 and, to a lower extent, Ser-376. Autophosphorylation and subsequent activation is inhibited by increases in intracellular ionic strength: Cl(-) potently inhibits WNK1 kinase activity via direct binding. Also inhibited by K(+) ions. Serine/threonine-protein kinase component of the WNK1-SPAK/OSR1 kinase cascade, which acts as a key regulator of blood pressure and regulatory volume increase by promoting ion influx. WNK1 mediates regulatory volume increase in response to hyperosmotic stress by acting as a molecular crowding sensor, which senses cell shrinkage and mediates formation of a membraneless compartment by undergoing liquid-liquid phase separation. The membraneless compartment concentrates WNK1 with its substrates, OXSR1/OSR1 and STK39/SPAK, promoting WNK1-dependent phosphorylation and activation of downstream kinases OXSR1/OSR1 and STK39/SPAK. Following activation, OXSR1/OSR1 and STK39/SPAK catalyze phosphorylation of ion cotransporters SLC12A1/NKCC2, SLC12A2/NKCC1, SLC12A5/KCC2 and SLC12A6/KCC3, regulating their activity. Phosphorylation of Na-K-Cl cotransporters SLC12A2/NKCC1 and SLC12A2/NKCC1 promote their activation and ion influx; simultaneously, phosphorylation of K-Cl cotransporters SLC12A5/KCC2 and SLC12A6/KCC3 inhibit their activity, blocking ion efflux. Also acts as a regulator of angiogenesis in endothelial cells via activation of OXSR1/OSR1 and STK39/SPAK: activation of OXSR1/OSR1 regulates chemotaxis and invasion, while STK39/SPAK regulates endothelial cell proliferation. Also acts independently of the WNK1-SPAK/OSR1 kinase cascade by catalyzing phosphorylation of other substrates, such as SYT2, PCF11 and NEDD4L. Mediates phosphorylation of SYT2, regulating SYT2 association with phospholipids and membrane-binding. Regulates mRNA export in the nucleus by mediating phosphorylation of PCF11, thereby decreasing the association between PCF11 and POLR2A/RNA polymerase II and promoting mRNA export to the cytoplasm. Acts as a negative regulator of autophagy. Required for the abscission step during mitosis, independently of the WNK1-SPAK/OSR1 kinase cascade. May also play a role in actin cytoskeletal reorganization. Also acts as a scaffold protein independently of its protein kinase activity: negatively regulates cell membrane localization of various transporters and channels, such as SLC4A4, SLC26A6, SLC26A9, TRPV4 and CFTR. Involved in the regulation of epithelial Na(+) channel (ENaC) by promoting activation of SGK1 in a kinase-independent manner: probably acts as a scaffold protein that promotes the recruitment of SGK1 to the mTORC2 complex in response to chloride, leading to mTORC2-dependent phosphorylation and activation of SGK1. Acts as an assembly factor for the ER membrane protein complex independently of its protein kinase activity: associates with EMC2 in the cytoplasm via its amphipathic alpha-helix, and prevents EMC2 ubiquitination and subsequent degradation, thereby promoting EMC2 stabilization. In Sus scrofa (Pig), this protein is Serine/threonine-protein kinase WNK1.